A 305-amino-acid polypeptide reads, in one-letter code: Nucleotide-binding protein Saro_2904 (305 aa).

Position 15 to 22 (15 to 22 (GLLGAGKT)) interacts with ATP. GTP is bound at residue 68–71 (DTRT).

This sequence belongs to the RapZ-like family.

Its function is as follows. Displays ATPase and GTPase activities. This chain is Nucleotide-binding protein Saro_2904, found in Novosphingobium aromaticivorans (strain ATCC 700278 / DSM 12444 / CCUG 56034 / CIP 105152 / NBRC 16084 / F199).